The following is a 360-amino-acid chain: Phospho-N-acetylmuramoyl-pentapeptide-transferase (360 aa).

The next 10 helical transmembrane spans lie at 26–46 (AILG…AMIR), 70–90 (GTPT…TLLW), 97–117 (FVWV…IDDY), 134–154 (FFWQ…TAQA), 168–188 (VAIQ…VGAS), 199–219 (GLAI…AYLS), 236–256 (VGDL…FLWF), 263–283 (VFMG…LAVV), 288–308 (IVLV…IMQV), and 338–358 (VIVR…ATLK).

This sequence belongs to the glycosyltransferase 4 family. MraY subfamily. Mg(2+) is required as a cofactor.

It localises to the cell inner membrane. The catalysed reaction is UDP-N-acetyl-alpha-D-muramoyl-L-alanyl-gamma-D-glutamyl-meso-2,6-diaminopimeloyl-D-alanyl-D-alanine + di-trans,octa-cis-undecaprenyl phosphate = di-trans,octa-cis-undecaprenyl diphospho-N-acetyl-alpha-D-muramoyl-L-alanyl-D-glutamyl-meso-2,6-diaminopimeloyl-D-alanyl-D-alanine + UMP. It functions in the pathway cell wall biogenesis; peptidoglycan biosynthesis. Its function is as follows. Catalyzes the initial step of the lipid cycle reactions in the biosynthesis of the cell wall peptidoglycan: transfers peptidoglycan precursor phospho-MurNAc-pentapeptide from UDP-MurNAc-pentapeptide onto the lipid carrier undecaprenyl phosphate, yielding undecaprenyl-pyrophosphoryl-MurNAc-pentapeptide, known as lipid I. In Thioalkalivibrio sulfidiphilus (strain HL-EbGR7), this protein is Phospho-N-acetylmuramoyl-pentapeptide-transferase.